A 413-amino-acid polypeptide reads, in one-letter code: Scarecrow-like protein 21 (413 aa).

The 373-residue stretch at isoleucine 41–lysine 413 folds into the GRAS domain. The leucine repeat I (LRI) stretch occupies residues glycine 48–serine 108. Residues valine 127–glycine 192 form a VHIID region. The VHIID signature appears at isoleucine 158 to aspartate 162. A leucine repeat II (LRII) region spans residues threonine 201–asparagine 233. The interval leucine 242–asparagine 336 is PFYRE. The SAW stretch occupies residues alanine 339–lysine 413.

The protein belongs to the GRAS family. In terms of assembly, interacts with Meloidogyne incognita 16D10. Expressed in seedlings, roots, cotyledons, leaves and flowers.

It is found in the nucleus. Its function is as follows. Probable transcription factor involved in plant development. The protein is Scarecrow-like protein 21 (SCL21) of Arabidopsis thaliana (Mouse-ear cress).